A 528-amino-acid polypeptide reads, in one-letter code: Phosphoenolpyruvate carboxykinase (ATP) (528 aa).

Residues Arg-56, Tyr-192, and Lys-198 each coordinate substrate. ATP-binding positions include Lys-198, His-217, and 233-241 (GLSGTGKTT). Mn(2+)-binding residues include Lys-198 and His-217. Position 254 (Asp-254) interacts with Mn(2+). 3 residues coordinate ATP: Glu-282, Arg-319, and Thr-444. A substrate-binding site is contributed by Arg-319.

Belongs to the phosphoenolpyruvate carboxykinase (ATP) family. Requires Mn(2+) as cofactor.

Its subcellular location is the cytoplasm. It catalyses the reaction oxaloacetate + ATP = phosphoenolpyruvate + ADP + CO2. It participates in carbohydrate biosynthesis; gluconeogenesis. In terms of biological role, involved in the gluconeogenesis. Catalyzes the conversion of oxaloacetate (OAA) to phosphoenolpyruvate (PEP) through direct phosphoryl transfer between the nucleoside triphosphate and OAA. The chain is Phosphoenolpyruvate carboxykinase (ATP) from Bacillus cereus (strain B4264).